We begin with the raw amino-acid sequence, 363 residues long: Pulmonary surfactant-associated protein B (363 aa).

The signal sequence occupies residues 1–16 (LLWLLLLPTLCGLGAA). Positions 17–180 (DWSAPSLACA…PHTQDLSEQQ (164 aa)) are excised as a propeptide. Residues 18-58 (WSAPSLACARGPAFWCQSLEQALQCRALGHCLQEVWGNARA) enclose the Saposin A-type domain. Saposin B-type domains are found at residues 58–140 (ADDL…KPGL), 184–261 (PLPY…SHED), and 277–352 (QESK…RTTF). Intrachain disulfides connect Cys-62/Cys-136, Cys-65/Cys-130, Cys-93/Cys-105, Cys-188/Cys-257, Cys-191/Cys-251, Cys-215/Cys-226, Cys-281/Cys-348, Cys-284/Cys-342, and Cys-307/Cys-317. A propeptide spanning residues 260 to 363 (EDSAGPALAS…PLQCIHIPHF (104 aa)) is cleaved from the precursor. Asn-293 carries an N-linked (GlcNAc...) asparagine glycan.

In terms of assembly, homodimer; disulfide-linked.

It is found in the secreted. It localises to the extracellular space. Its subcellular location is the surface film. In terms of biological role, pulmonary surfactant-associated proteins promote alveolar stability by lowering the surface tension at the air-liquid interface in the peripheral air spaces. SP-B increases the collapse pressure of palmitic acid to nearly 70 millinewtons per meter. This is Pulmonary surfactant-associated protein B (SFTPB) from Canis lupus familiaris (Dog).